Consider the following 302-residue polypeptide: Mitochondrial adapter protein MCP1 (302 aa).

The disordered stretch occupies residues 1–35; sequence MIKLHEVPPEPVDPASLPHDVNAHSPEGDGNPDKR. The Cytoplasmic segment spans residues 1–61; that stretch reads MIKLHEVPPE…RFLWNCQKIS (61 aa). The PxP signature appears at 4–12; the sequence is LHEVPPEPV. Residues 62 to 82 form a helical membrane-spanning segment; the sequence is VLPMALYFPLHAANTLITPAV. Residues 83–100 lie on the Mitochondrial intermembrane side of the membrane; the sequence is SPDSAPDDVLMMVREILP. A helical membrane pass occupies residues 101–121; the sequence is SITTKLLVAGITLHVSAGVLL. At 122 to 173 the chain is on the cytoplasmic side; sequence RIVNNWNKPRRNRHRHLKISAEQDLSQDSIGLTGGISGYLFGLYKTFRIPPQ. The chain crosses the membrane as a helical span at residues 174-194; the sequence is VISGYILVPVLIYHLLIMKWV. The Mitochondrial intermembrane portion of the chain corresponds to 195–219; the sequence is PNSISTEVDFASIKQLLSSKNRWWK. Residues 220-240 traverse the membrane as a helical segment; sequence WLGGLVPLAILLESGVYHIGS. Residues 241-258 lie on the Cytoplasmic side of the membrane; it reads GLCRYFGVRKMTSRKKWS. A helical membrane pass occupies residues 259 to 276; it reads TAINLLTLVGFVSLIRLM. Residues 277-302 are Mitochondrial intermembrane-facing; that stretch reads KEDSTKLGPNQFESIFKKIRLLLHVN.

In terms of assembly, interacts (via PxP motif) with VPS13 (via SHR-BD domain).

It localises to the mitochondrion outer membrane. Recruits the lipid transfer protein Vps13 to mitochondria thereby promoting vacuole-mitochondria contacts. Involved in mitochondrial lipid homeostasis. The chain is Mitochondrial adapter protein MCP1 from Saccharomyces cerevisiae (strain ATCC 204508 / S288c) (Baker's yeast).